Reading from the N-terminus, the 182-residue chain is Troponin I, fast skeletal muscle (182 aa).

N-acetylglycine is present on Gly-2. The tract at residues 2–48 (GDEEKRNRAITARRQHLKSVMLQIAATELEKEEGRREAEKQNYLAEH) is involved in binding TNC. Phosphothreonine; by PHK is present on Thr-12. The segment at 97–117 (NQKLFDLRGKFKRPPLRRVRM) is involved in binding TNC and actin. A Phosphoserine; by PKA modification is found at Ser-118.

This sequence belongs to the troponin I family. Binds to actin and tropomyosin.

Its function is as follows. Troponin I is the inhibitory subunit of troponin, the thin filament regulatory complex which confers calcium-sensitivity to striated muscle actomyosin ATPase activity. This Oryctolagus cuniculus (Rabbit) protein is Troponin I, fast skeletal muscle (TNNI2).